We begin with the raw amino-acid sequence, 147 residues long: Putative acetyltransferase BSU40680 (147 aa).

The N-acetyltransferase domain maps to 1–144 (MNVKKITSEQ…PHVLMTKQDD (144 aa)). CoA contacts are provided by residues 74–76 (ICI) and 115–117 (GFY).

Belongs to the UPF0039 (ElaA) family.

Could catalyze the transfer of an acetyl group from acetyl coenzyme A (AcCoA) to an acceptor substrate and release both CoA and the acetylated product. The protein is Putative acetyltransferase BSU40680 (yybD) of Bacillus subtilis (strain 168).